We begin with the raw amino-acid sequence, 646 residues long: Threonine--tRNA ligase (646 aa).

The 61-residue stretch at 1–61 folds into the TGS domain; the sequence is MIKITFPDGS…NEDANFVLYK (61 aa). The tract at residues 242-541 is catalytic; it reads DHRKIGKEMD…LIEHTAGKFP (300 aa). 3 residues coordinate Zn(2+): C337, H388, and H518.

Belongs to the class-II aminoacyl-tRNA synthetase family. As to quaternary structure, homodimer. Zn(2+) serves as cofactor.

It is found in the cytoplasm. The enzyme catalyses tRNA(Thr) + L-threonine + ATP = L-threonyl-tRNA(Thr) + AMP + diphosphate + H(+). In terms of biological role, catalyzes the attachment of threonine to tRNA(Thr) in a two-step reaction: L-threonine is first activated by ATP to form Thr-AMP and then transferred to the acceptor end of tRNA(Thr). Also edits incorrectly charged L-seryl-tRNA(Thr). The protein is Threonine--tRNA ligase of Phocaeicola vulgatus (strain ATCC 8482 / DSM 1447 / JCM 5826 / CCUG 4940 / NBRC 14291 / NCTC 11154) (Bacteroides vulgatus).